Consider the following 81-residue polypeptide: uncharacterized protein (81 aa).

This is an uncharacterized protein from Acidianus bottle-shaped virus (isolate Italy/Pozzuoli) (ABV).